A 264-amino-acid chain; its full sequence is Teichoic acids export ATP-binding protein TagH (264 aa).

Residues 5–243 (VNIKNVTKEY…YEAFLNDFKK (239 aa)) enclose the ABC transporter domain. 57–64 (GINGSGKS) is an ATP binding site.

It belongs to the ABC transporter superfamily. Teichoic acids exporter (TC 3.A.1.104.1) family. In terms of assembly, the complex is composed of two ATP-binding proteins (TagH) and two transmembrane proteins (TagG).

It is found in the cell membrane. It carries out the reaction ATP + H2O + teichoic acidSide 1 = ADP + phosphate + teichoic acidSide 2.. Part of the ABC transporter complex TagGH involved in teichoic acids export. Responsible for energy coupling to the transport system. In Staphylococcus aureus (strain USA300), this protein is Teichoic acids export ATP-binding protein TagH.